The sequence spans 621 residues: tRNA uridine 5-carboxymethylaminomethyl modification enzyme MnmG (621 aa).

8–13 serves as a coordination point for FAD; that stretch reads GAGHAG. The segment at 199–227 is disordered; the sequence is PRIDRRSVDYSRVEEQKGDENPPPFSFST. A compositionally biased stretch (basic and acidic residues) spans 200–218; the sequence is RIDRRSVDYSRVEEQKGDE. 269 to 283 provides a ligand contact to NAD(+); that stretch reads GPRYCPSIEDKIFRF.

This sequence belongs to the MnmG family. In terms of assembly, homodimer. Heterotetramer of two MnmE and two MnmG subunits. It depends on FAD as a cofactor.

The protein localises to the cytoplasm. In terms of biological role, NAD-binding protein involved in the addition of a carboxymethylaminomethyl (cmnm) group at the wobble position (U34) of certain tRNAs, forming tRNA-cmnm(5)s(2)U34. This chain is tRNA uridine 5-carboxymethylaminomethyl modification enzyme MnmG, found in Chlorobium luteolum (strain DSM 273 / BCRC 81028 / 2530) (Pelodictyon luteolum).